Consider the following 510-residue polypeptide: Histidine ammonia-lyase (510 aa).

The segment at residues 144 to 146 (ASG) is a cross-link (5-imidazolinone (Ala-Gly)). Position 145 is a 2,3-didehydroalanine (Ser) (S145).

This sequence belongs to the PAL/histidase family. Contains an active site 4-methylidene-imidazol-5-one (MIO), which is formed autocatalytically by cyclization and dehydration of residues Ala-Ser-Gly.

It is found in the cytoplasm. The enzyme catalyses L-histidine = trans-urocanate + NH4(+). The protein operates within amino-acid degradation; L-histidine degradation into L-glutamate; N-formimidoyl-L-glutamate from L-histidine: step 1/3. In Chromobacterium violaceum (strain ATCC 12472 / DSM 30191 / JCM 1249 / CCUG 213 / NBRC 12614 / NCIMB 9131 / NCTC 9757 / MK), this protein is Histidine ammonia-lyase.